The sequence spans 104 residues: L-rhamnose mutarotase (104 aa).

Tyr18 contacts substrate. The active-site Proton donor is the His22. Residues Tyr41 and 76-77 (WW) each bind substrate.

It belongs to the rhamnose mutarotase family. Homodimer.

It localises to the cytoplasm. The enzyme catalyses alpha-L-rhamnose = beta-L-rhamnose. Its pathway is carbohydrate metabolism; L-rhamnose metabolism. Its function is as follows. Involved in the anomeric conversion of L-rhamnose. The sequence is that of L-rhamnose mutarotase from Shouchella clausii (strain KSM-K16) (Alkalihalobacillus clausii).